The primary structure comprises 85 residues: Coiled-coil-helix-coiled-coil-helix domain-containing protein 7 (85 aa).

Positions I13–M55 constitute a CHCH domain. 2 short sequence motifs (cx9C motif) span residues C16–C26 and C37–C47. Disulfide bonds link C16-C47 and C26-C37.

The protein belongs to the CHCHD7 family. In terms of assembly, monomer.

The protein localises to the mitochondrion intermembrane space. This chain is Coiled-coil-helix-coiled-coil-helix domain-containing protein 7 (Chchd7), found in Mus musculus (Mouse).